Consider the following 222-residue polypeptide: UPF0758 protein YicR (222 aa).

The 123-residue stretch at 100-222 (PLLSPEMTRE…YVSFAERGWI (123 aa)) folds into the MPN domain. Positions 171, 173, and 184 each coordinate Zn(2+). The JAMM motif motif lies at 171–184 (HNHPSGCAEPSKAD).

Belongs to the UPF0758 family. YicR subfamily.

In Escherichia coli O45:K1 (strain S88 / ExPEC), this protein is UPF0758 protein YicR.